The primary structure comprises 434 residues: Alpha-enolase (434 aa).

Serine 40 is a binding site for Mg(2+). Substrate-binding residues include histidine 158 and glutamate 167. The active-site Proton donor is the glutamate 210. The Mg(2+) site is built by aspartate 245, glutamate 293, and aspartate 318. The substrate site is built by glutamate 293 and aspartate 318. Catalysis depends on lysine 343, which acts as the Proton acceptor. Substrate is bound by residues 370–373 (SHRS) and lysine 394.

It belongs to the enolase family. As to quaternary structure, homodimer. It depends on Mg(2+) as a cofactor.

The protein localises to the cytoplasm. The catalysed reaction is (2R)-2-phosphoglycerate = phosphoenolpyruvate + H2O. The protein operates within carbohydrate degradation; glycolysis; pyruvate from D-glyceraldehyde 3-phosphate: step 4/5. The polypeptide is Alpha-enolase (eno1) (Xenopus laevis (African clawed frog)).